A 280-amino-acid chain; its full sequence is Thymidylate synthase (280 aa).

Arginine 21 contacts dUMP. Histidine 51 serves as a coordination point for (6R)-5,10-methylene-5,6,7,8-tetrahydrofolate. 142–143 contributes to the dUMP binding site; it reads RR. Cysteine 162 (nucleophile) is an active-site residue. Residues 182–185, asparagine 193, and 223–225 contribute to the dUMP site; these read RSAD and HLY. Aspartate 185 contributes to the (6R)-5,10-methylene-5,6,7,8-tetrahydrofolate binding site. (6R)-5,10-methylene-5,6,7,8-tetrahydrofolate is bound at residue alanine 279.

Belongs to the thymidylate synthase family. Bacterial-type ThyA subfamily. In terms of assembly, homodimer.

It is found in the cytoplasm. It carries out the reaction dUMP + (6R)-5,10-methylene-5,6,7,8-tetrahydrofolate = 7,8-dihydrofolate + dTMP. It functions in the pathway pyrimidine metabolism; dTTP biosynthesis. Functionally, catalyzes the reductive methylation of 2'-deoxyuridine-5'-monophosphate (dUMP) to 2'-deoxythymidine-5'-monophosphate (dTMP) while utilizing 5,10-methylenetetrahydrofolate (mTHF) as the methyl donor and reductant in the reaction, yielding dihydrofolate (DHF) as a by-product. This enzymatic reaction provides an intracellular de novo source of dTMP, an essential precursor for DNA biosynthesis. The chain is Thymidylate synthase from Acinetobacter baumannii (strain AB307-0294).